Reading from the N-terminus, the 831-residue chain is Molybdenum cofactor sulfurase (831 aa).

Lys-262 is modified (N6-(pyridoxal phosphate)lysine). Cys-422 is a catalytic residue. Residues 651–823 (AWLSEFLGKP…LSIGSHVIPK (173 aa)) form the MOSC domain.

It belongs to the class-V pyridoxal-phosphate-dependent aminotransferase family. MOCOS subfamily. Pyridoxal 5'-phosphate serves as cofactor.

It carries out the reaction Mo-molybdopterin + L-cysteine + AH2 = thio-Mo-molybdopterin + L-alanine + A + H2O. It participates in cofactor biosynthesis; molybdopterin biosynthesis. Its function is as follows. Sulfurates the molybdenum cofactor. Sulfation of molybdenum is essential for xanthine dehydrogenase (XDH) and aldehyde oxidase (ADO) enzymes in which molybdenum cofactor is liganded by 1 oxygen and 1 sulfur atom in active form. This Danio rerio (Zebrafish) protein is Molybdenum cofactor sulfurase (mocos).